Reading from the N-terminus, the 343-residue chain is 2-deoxy-scyllo-inosamine dehydrogenase (343 aa).

Residues Cys37, His59, Cys91, Cys94, Cys97, Cys105, and Glu146 each contribute to the Zn(2+) site.

It belongs to the zinc-containing alcohol dehydrogenase family. DOIA dehydrogenase subfamily. Zn(2+) is required as a cofactor.

The enzyme catalyses 2-deoxy-scyllo-inosamine + NADP(+) = 3-amino-2,3-dideoxy-scyllo-inosose + NADPH + H(+). The catalysed reaction is 2-deoxy-scyllo-inosamine + NAD(+) = 3-amino-2,3-dideoxy-scyllo-inosose + NADH + H(+). It participates in metabolic intermediate biosynthesis; 2-deoxystreptamine biosynthesis; 2-deoxystreptamine from D-glucose 6-phosphate: step 3/4. Its pathway is antibiotic biosynthesis; kanamycin biosynthesis. Its function is as follows. Catalyzes the oxidation of 2-deoxy-scyllo-inosamine (DOIA) with NAD(+) or NADP(+), forming 3-amino-2,3-dideoxy-scyllo-inosose (amino-DOI). The sequence is that of 2-deoxy-scyllo-inosamine dehydrogenase (kanE) from Streptomyces kanamyceticus.